Here is a 213-residue protein sequence, read N- to C-terminus: Adenylate kinase (213 aa).

10 to 15 (GAGKGT) contributes to the ATP binding site. The NMP stretch occupies residues 30–59 (STGDMFRAAMANQTEMGLLAKSYIDKGDLV). Residues T31, R36, 57–59 (DLV), 86–89 (GYPR), and Q93 each bind AMP. The tract at residues 127 to 160 (GRIIHKKTGETFHKIFNPPAGDYDENDYYQREDD) is LID. ATP contacts are provided by residues R128 and 137-138 (TF). AMP is bound by residues R157 and R168. Q196 contributes to the ATP binding site.

It belongs to the adenylate kinase family. Monomer.

The protein localises to the cytoplasm. It carries out the reaction AMP + ATP = 2 ADP. Its pathway is purine metabolism; AMP biosynthesis via salvage pathway; AMP from ADP: step 1/1. Its function is as follows. Catalyzes the reversible transfer of the terminal phosphate group between ATP and AMP. Plays an important role in cellular energy homeostasis and in adenine nucleotide metabolism. The chain is Adenylate kinase from Streptococcus uberis (strain ATCC BAA-854 / 0140J).